The primary structure comprises 274 residues: tRNA-cytidine(32) 2-sulfurtransferase (274 aa).

Residues 40-45 (SGGKDS) carry the PP-loop motif motif. Residues Cys-115, Cys-118, and Cys-206 each contribute to the [4Fe-4S] cluster site.

It belongs to the TtcA family. In terms of assembly, homodimer. The cofactor is Mg(2+). [4Fe-4S] cluster serves as cofactor.

The protein localises to the cytoplasm. The enzyme catalyses cytidine(32) in tRNA + S-sulfanyl-L-cysteinyl-[cysteine desulfurase] + AH2 + ATP = 2-thiocytidine(32) in tRNA + L-cysteinyl-[cysteine desulfurase] + A + AMP + diphosphate + H(+). Its pathway is tRNA modification. Its function is as follows. Catalyzes the ATP-dependent 2-thiolation of cytidine in position 32 of tRNA, to form 2-thiocytidine (s(2)C32). The sulfur atoms are provided by the cysteine/cysteine desulfurase (IscS) system. This Pseudomonas syringae pv. syringae (strain B728a) protein is tRNA-cytidine(32) 2-sulfurtransferase.